The sequence spans 117 residues: Venom nerve growth factor (117 aa).

3 disulfides stabilise this stretch: Cys12–Cys77, Cys55–Cys105, and Cys65–Cys107. The N-linked (GlcNAc...) asparagine glycan is linked to Asn21.

It belongs to the NGF-beta family. As to quaternary structure, homodimer; non-covalently linked. Expressed by the venom gland.

It localises to the secreted. In terms of biological role, nerve growth factor is important for the development and maintenance of the sympathetic and sensory nervous systems. It stimulates division and differentiation of sympathetic and embryonic sensory neurons as well as basal forebrain cholinergic neurons in the brain. Its relevance in the snake venom is not clear. However, it has been shown to inhibit metalloproteinase-dependent proteolysis of platelet glycoprotein Ib alpha, suggesting a metalloproteinase inhibition to prevent metalloprotease autodigestion and/or protection against prey proteases. Binds a lipid between the two protein chains in the homodimer. The lipid-bound form promotes histamine relase from mouse mast cells, contrary to the lipid-free form. The sequence is that of Venom nerve growth factor from Daboia russelii (Russel's viper).